Here is a 197-residue protein sequence, read N- to C-terminus: Phospholipid hydroperoxide glutathione peroxidase (197 aa).

Ser40 bears the Phosphoserine mark. Residue Sec73 is part of the active site. Sec73 is a non-standard amino acid (selenocysteine).

The protein belongs to the glutathione peroxidase family. As to quaternary structure, monomer. Has a tendency to form higher mass oligomers. Interacts with FUNDC1; this interaction promotes GPX4 recruitment into mitochondria through TOM/TIM complex where it is degraded by mitophagy.

It localises to the mitochondrion. It is found in the cytoplasm. The enzyme catalyses a hydroperoxy polyunsaturated fatty acid + 2 glutathione = a hydroxy polyunsaturated fatty acid + glutathione disulfide + H2O. It carries out the reaction 2 glutathione + H2O2 = glutathione disulfide + 2 H2O. The catalysed reaction is tert-butyl hydroperoxide + 2 glutathione = tert-butanol + glutathione disulfide + H2O. It catalyses the reaction cumene hydroperoxide + 2 glutathione = 2-phenylpropan-2-ol + glutathione disulfide + H2O. The enzyme catalyses (9S)-hydroperoxy-(10E,12Z)-octadecadienoate + 2 glutathione = (9S)-hydroxy-(10E,12Z)-octadecadienoate + glutathione disulfide + H2O. It carries out the reaction (13S)-hydroperoxy-(9Z,11E)-octadecadienoate + 2 glutathione = (13S)-hydroxy-(9Z,11E)-octadecadienoate + glutathione disulfide + H2O. The catalysed reaction is (5S)-hydroperoxy-(6E,8Z,11Z,14Z)-eicosatetraenoate + 2 glutathione = (5S)-hydroxy-(6E,8Z,11Z,14Z)-eicosatetraenoate + glutathione disulfide + H2O. It catalyses the reaction (12R)-hydroperoxy-(5Z,8Z,10E,14Z)-eicosatetraenoate + 2 glutathione = (12R)-hydroxy-(5Z,8Z,10E,14Z)-eicosatetraenoate + glutathione disulfide + H2O. The enzyme catalyses (12S)-hydroperoxy-(5Z,8Z,10E,14Z)-eicosatetraenoate + 2 glutathione = (12S)-hydroxy-(5Z,8Z,10E,14Z)-eicosatetraenoate + glutathione disulfide + H2O. It carries out the reaction (15S)-hydroperoxy-(5Z,8Z,11Z,13E)-eicosatetraenoate + 2 glutathione = (15S)-hydroxy-(5Z,8Z,11Z,13E)-eicosatetraenoate + glutathione disulfide + H2O. The catalysed reaction is (5S)-hydroperoxy-(6E,8Z,11Z,14Z,17Z)-eicosapentaenoate + 2 glutathione = (5S)-hydroxy-(6E,8Z,11Z,14Z,17Z)-eicosapentaenoate + glutathione disulfide + H2O. It catalyses the reaction (12S)-hydroperoxy-(5Z,8Z,10E,14Z,17Z)-eicosapentaenoate + 2 glutathione = (12S)-hydroxy-(5Z,8Z,10E,14Z,17Z)-eicosapentaenoate + glutathione disulfide + H2O. The enzyme catalyses (15S)-hydroperoxy-(5Z,8Z,11Z,13E,17Z)-eicosapentaenoate + 2 glutathione = (15S)-hydroxy-(5Z,8Z,11Z,13E,17Z)-eicosapentaenoate + glutathione disulfide + H2O. It carries out the reaction (15S)-hydroperoxy-(11Z,13E)-eicosadienoate + 2 glutathione = (15S)-hydroxy-(11Z,13E)-eicosadienoate + glutathione disulfide + H2O. The catalysed reaction is (17S)-hydroperoxy-(4Z,7Z,10Z,13Z,15E,19Z)-docosahexaenoate + 2 glutathione = (17S)-hydroxy-(4Z,7Z,10Z,13Z,15E,19Z)-docosahexaenoate + glutathione disulfide + H2O. It catalyses the reaction a hydroperoxy-1,2-diacyl-glycero-3-phosphocholine + 2 glutathione = a hydroxy-1,2-diacyl-glycero-3-phosphocholine + glutathione disulfide + H2O. Its function is as follows. Essential antioxidant peroxidase that directly reduces phospholipid hydroperoxide even if they are incorporated in membranes and lipoproteins. Can also reduce fatty acid hydroperoxide, cholesterol hydroperoxide and thymine hydroperoxide. Plays a key role in protecting cells from oxidative damage by preventing membrane lipid peroxidation. Required to prevent cells from ferroptosis, a non-apoptotic cell death resulting from an iron-dependent accumulation of lipid reactive oxygen species. The presence of selenocysteine (Sec) versus Cys at the active site is essential for life: it provides resistance to overoxidation and prevents cells against ferroptosis. The presence of Sec at the active site is also essential for the survival of a specific type of parvalbumin-positive interneurons, thereby preventing against fatal epileptic seizures. May be required to protect cells from the toxicity of ingested lipid hydroperoxides. Required for normal sperm development and male fertility. Essential for maturation and survival of photoreceptor cells. Plays a role in a primary T-cell response to viral and parasitic infection by protecting T-cells from ferroptosis and by supporting T-cell expansion. Plays a role of glutathione peroxidase in platelets in the arachidonic acid metabolism. Reduces hydroperoxy ester lipids formed by a 15-lipoxygenase that may play a role as down-regulator of the cellular 15-lipoxygenase pathway. Can also reduce small soluble hydroperoxides such as H2O2, cumene hydroperoxide and tert-butyl hydroperoxide. This Bos taurus (Bovine) protein is Phospholipid hydroperoxide glutathione peroxidase.